The sequence spans 485 residues: Chitin synthase regulator 2 (485 aa).

Sel1-like repeat units follow at residues 164–202 (PDAQ…KHGH), 203–238 (PDAC…VGLH), 239–275 (PGAM…EHAT), 279–316 (PHAL…ELGY), 317–353 (APSA…QQDH), 354–391 (KDAC…ELGL), and 392–427 (AKAQ…EGGD). Residues 460–485 (AANLAQRSGSGSGASGKDGKDGCLIM) are disordered. Residues 476–485 (KDGKDGCLIM) are compositionally biased toward basic and acidic residues. Position 482 is a cysteine methyl ester (cysteine 482). Cysteine 482 carries S-farnesyl cysteine lipidation. The propeptide at 483-485 (LIM) is removed in mature form.

It belongs to the SKT5 family.

It localises to the cell membrane. In terms of biological role, activator of the chitin synthase CHS3 which polymerizes chitin, a structural polymer of the fungal cell wall. Chitin produced by CHS3 is deacetylated to chitosan, which helps to maintain cell wall integrity, anchor melanin, and offers an advantage during infection, as chitosan is less readily detected by host immunosurveillance. This Cryptococcus neoformans var. grubii serotype A (strain H99 / ATCC 208821 / CBS 10515 / FGSC 9487) (Filobasidiella neoformans var. grubii) protein is Chitin synthase regulator 2.